The following is a 255-amino-acid chain: 1-(5-phosphoribosyl)-5-[(5-phosphoribosylamino)methylideneamino] imidazole-4-carboxamide isomerase (255 aa).

The active-site Proton acceptor is D8. Catalysis depends on D129, which acts as the Proton donor.

Belongs to the HisA/HisF family.

Its subcellular location is the cytoplasm. The enzyme catalyses 1-(5-phospho-beta-D-ribosyl)-5-[(5-phospho-beta-D-ribosylamino)methylideneamino]imidazole-4-carboxamide = 5-[(5-phospho-1-deoxy-D-ribulos-1-ylimino)methylamino]-1-(5-phospho-beta-D-ribosyl)imidazole-4-carboxamide. Its pathway is amino-acid biosynthesis; L-histidine biosynthesis; L-histidine from 5-phospho-alpha-D-ribose 1-diphosphate: step 4/9. The chain is 1-(5-phosphoribosyl)-5-[(5-phosphoribosylamino)methylideneamino] imidazole-4-carboxamide isomerase from Parasynechococcus marenigrum (strain WH8102).